The following is a 517-amino-acid chain: Ribonuclease Y (517 aa).

The chain crosses the membrane as a helical span at residues 1-21 (MIEVVVGIGAGLIGIGAGYLV). The region spanning 207–273 (LINVVNIKND…TRVIELLVED (67 aa)) is the KH domain. The HD domain occupies 333 to 426 (ALAHSLEVAH…VCAADALSAA (94 aa)).

Belongs to the RNase Y family.

It localises to the cell membrane. Endoribonuclease that initiates mRNA decay. In Campylobacter fetus subsp. fetus (strain 82-40), this protein is Ribonuclease Y.